We begin with the raw amino-acid sequence, 499 residues long: Glycerol kinase (499 aa).

Position 13 (Thr-13) interacts with ADP. ATP-binding residues include Thr-13, Thr-14, and Ser-15. Residue Thr-13 coordinates sn-glycerol 3-phosphate. Arg-17 lines the ADP pocket. Arg-83, Glu-84, Tyr-135, and Asp-244 together coordinate sn-glycerol 3-phosphate. The glycerol site is built by Arg-83, Glu-84, Tyr-135, Asp-244, and Gln-245. Residues Thr-266 and Gly-309 each contribute to the ADP site. 4 residues coordinate ATP: Thr-266, Gly-309, Gln-313, and Gly-410. ADP-binding residues include Gly-410 and Asn-414.

Belongs to the FGGY kinase family.

It carries out the reaction glycerol + ATP = sn-glycerol 3-phosphate + ADP + H(+). Its pathway is polyol metabolism; glycerol degradation via glycerol kinase pathway; sn-glycerol 3-phosphate from glycerol: step 1/1. With respect to regulation, inhibited by fructose 1,6-bisphosphate (FBP). Its function is as follows. Key enzyme in the regulation of glycerol uptake and metabolism. Catalyzes the phosphorylation of glycerol to yield sn-glycerol 3-phosphate. This Paraburkholderia xenovorans (strain LB400) protein is Glycerol kinase.